The primary structure comprises 121 residues: Protein yippee-like 5 (121 aa).

The Yippee domain maps to arginine 13–glutamate 110. Positions 17, 20, 73, and 76 each coordinate Zn(2+). The residue at position 118 (serine 118) is a Phosphoserine.

Belongs to the yippee family. As to quaternary structure, identified in the CTLH complex that contains GID4, RANBP9 and/or RANBP10, MKLN1, MAEA, RMND5A (or alternatively its paralog RMND5B), GID8, ARMC8, WDR26 and YPEL5. Within this complex, MAEA, RMND5A (or alternatively its paralog RMND5B), GID8, WDR26, and RANBP9 and/or RANBP10 form the catalytic core, while GID4, MKLN1, ARMC8 and YPEL5 have ancillary roles. Interacts with RANBP9 and RANBP10.

It localises to the nucleus. The protein resides in the cytoplasm. Its subcellular location is the cytoskeleton. The protein localises to the microtubule organizing center. It is found in the centrosome. It localises to the spindle pole. The protein resides in the midbody. Functionally, component of the CTLH E3 ubiquitin-protein ligase complex that selectively accepts ubiquitin from UBE2H and mediates ubiquitination and subsequent proteasomal degradation of the transcription factor HBP1. Required for normal cell proliferation. The polypeptide is Protein yippee-like 5 (YPEL5) (Macaca fascicularis (Crab-eating macaque)).